A 777-amino-acid chain; its full sequence is Subtilisin-like protease SBT3.7 (777 aa).

An N-terminal signal peptide occupies residues 1-22; the sequence is MRNHRTSIFVVLSLVIILNGQS. Residues 23–113 constitute a propeptide, activation peptide; the sequence is GFLPRAGAES…VIPDRFYKPA (91 aa). The Inhibitor I9 domain occupies 34-111; sequence VHIVYLGEKQ…VHVIPDRFYK (78 aa). Residues 117-624 enclose the Peptidase S8 domain; sequence TWDYLGLSPT…GGLVNPEKAT (508 aa). Asn-133 is a glycosylation site (N-linked (GlcNAc...) asparagine). The active-site Charge relay system is the Asp-147. 2 N-linked (GlcNAc...) asparagine glycosylation sites follow: Asn-180 and Asn-206. The active-site Charge relay system is His-222. Asn-237, Asn-397, Asn-412, and Asn-540 each carry an N-linked (GlcNAc...) asparagine glycan. Positions 386-481 constitute a PA domain; the sequence is SLVYPENPGN…ELGTYILFYI (96 aa). Ser-555 acts as the Charge relay system in catalysis. N-linked (GlcNAc...) asparagine glycans are attached at residues Asn-647, Asn-723, and Asn-758.

This sequence belongs to the peptidase S8 family.

It localises to the secreted. The sequence is that of Subtilisin-like protease SBT3.7 from Arabidopsis thaliana (Mouse-ear cress).